The following is a 524-amino-acid chain: Putative mediator of RNA polymerase II transcription subunit 8 (524 aa).

2 coiled-coil regions span residues 117-146 and 175-211; these read LKLHIKSFNDRIDKVDQEFENKIQQISKHK and NAQQQLAQQQQQQATINALQQQQRLLNAQQQQQQQQQ. Disordered regions lie at residues 312–340, 356–379, and 430–451; these read VASPQQQVTSKQVPIQSTNKPLPQQQPSI, LPNTTSPPVNNNNQSPINSGIGGG, and QQNQQNQQNQQNQQIHQHIQHL. Over residues 314–333 the composition is skewed to polar residues; the sequence is SPQQQVTSKQVPIQSTNKPL. Over residues 356–374 the composition is skewed to low complexity; that stretch reads LPNTTSPPVNNNNQSPINS. Residues 398 to 478 are a coiled coil; it reads IQQQIQLQQQ…LQQQFQQQQL (81 aa).

The protein belongs to the Mediator complex subunit 8 family. In terms of assembly, component of the Mediator complex. May be part of a multisubunit E3 ubiquitin-protein ligase complex.

It localises to the nucleus. It participates in protein modification; protein ubiquitination. Component of the Mediator complex, a coactivator involved in the regulated transcription of nearly all RNA polymerase II-dependent genes. Mediator functions as a bridge to convey information from gene-specific regulatory proteins to the basal RNA polymerase II transcription machinery. Mediator is recruited to promoters by direct interactions with regulatory proteins and serves as a scaffold for the assembly of a functional preinitiation complex with RNA polymerase II and the general transcription factors. May play a role as a target recruitment subunit in E3 ubiquitin-protein ligase complexes and thus in ubiquitination and subsequent proteasomal degradation of target proteins. This is Putative mediator of RNA polymerase II transcription subunit 8 (med8) from Dictyostelium discoideum (Social amoeba).